The primary structure comprises 368 residues: o-succinylbenzoate synthase (368 aa).

The active-site Proton donor is Lys-183. Asp-213, Glu-239, and Asp-264 together coordinate Mg(2+). Lys-290 serves as the catalytic Proton acceptor.

Belongs to the mandelate racemase/muconate lactonizing enzyme family. MenC type 1 subfamily. In terms of assembly, monomer. Requires a divalent metal cation as cofactor.

The catalysed reaction is (1R,6R)-6-hydroxy-2-succinyl-cyclohexa-2,4-diene-1-carboxylate = 2-succinylbenzoate + H2O. The protein operates within quinol/quinone metabolism; 1,4-dihydroxy-2-naphthoate biosynthesis; 1,4-dihydroxy-2-naphthoate from chorismate: step 4/7. Its pathway is cofactor biosynthesis; phylloquinone biosynthesis. Converts 2-succinyl-6-hydroxy-2,4-cyclohexadiene-1-carboxylate (SHCHC) to 2-succinylbenzoate (OSB). Does not show N-succinylamino acid racemase (NSAR) activity with N-succinyl-L-phenylglycine as substrate. This is o-succinylbenzoate synthase from Desulfotalea psychrophila (strain LSv54 / DSM 12343).